The primary structure comprises 428 residues: Enolase (428 aa).

Glutamine 163 provides a ligand contact to (2R)-2-phosphoglycerate. Glutamate 205 serves as the catalytic Proton donor. Mg(2+) contacts are provided by aspartate 242, glutamate 286, and aspartate 313. 4 residues coordinate (2R)-2-phosphoglycerate: lysine 338, arginine 367, serine 368, and lysine 389. Lysine 338 acts as the Proton acceptor in catalysis.

This sequence belongs to the enolase family. Requires Mg(2+) as cofactor.

The protein localises to the cytoplasm. It is found in the secreted. It localises to the cell surface. It carries out the reaction (2R)-2-phosphoglycerate = phosphoenolpyruvate + H2O. It participates in carbohydrate degradation; glycolysis; pyruvate from D-glyceraldehyde 3-phosphate: step 4/5. In terms of biological role, catalyzes the reversible conversion of 2-phosphoglycerate (2-PG) into phosphoenolpyruvate (PEP). It is essential for the degradation of carbohydrates via glycolysis. This Bordetella bronchiseptica (strain ATCC BAA-588 / NCTC 13252 / RB50) (Alcaligenes bronchisepticus) protein is Enolase.